Consider the following 793-residue polypeptide: MGRKLDPTKKEKRGPGRKARKQKGAETELVRFLPAAGDENSKRLSSRARKRAAKRRAGSVDVPKPNKSPGIKTLPGELSKGAVQARGKKRPAPIQNSDGDEEEDSGEDDVVTQGDLWGSEDSDEDMVDDYGAASNSEDEEEKLLPIERAALKQKAQDATAGVLWNEEDTDEDEDDDGVSPESHPRKDDKAEGDLQINVEDEEAFVLPPAGETDQDGQAPDLQRVHKRIQDIVGVLRDFGAQREEGRSRAEYLSRLQKDLATYYSYGDFLLSKLMELFPLSELIEFLEANEVPRPITLRTNTLKTRRRDLAQLLINRGVNLDPLGKWSKSGLVVYDSSVPIGATPEYLAGHYMLQGASSMLPVMALAPQEHERILDMCCAPGGKTSYIAQLMKNTGVILANDANADRLKSVVGNLHRLGVTNTIISHYDGRQFPKVVGGFDRVLLDAPCSGTGVISKDPAVKTNKDEKDIQRCAHLQKELLLSAIDSVNAASKTGGYLVYCTCSITVEENEWVVDYALKKRNVRLVPTGLDFGQEGFTRFQARRFHPTLRSTRRFYPHTHNMDGFFIAKFKKFSNSIPQPHAGNSAAATPTEPDLKDQVTPKSENGSQPTKKARGAVKAKQQLLRQPHSKKPFQKLNGIAKGPGLSTEPSVPDAQVSTRPSQSAGNADVNSKRKRSEKLKQRGPKWKPSKEAAVPKPSAPSRVEDSGTPVPTPSEIRAAPRPKDCAPSLGKAKKKQKGKQQLAQQPANGAAPLKEDAVSKGPSAPFVSPHSSTRPPPAKRRKSMTKGNSQPLLS.

Residues 1-194 are disordered; that stretch reads MGRKLDPTKK…RKDDKAEGDL (194 aa). The tract at residues 1-355 is N-terminal domain; sequence MGRKLDPTKK…YLAGHYMLQG (355 aa). Basic residues-rich tracts occupy residues 10–22 and 44–57; these read KEKRGPGRKARKQ and LSSRARKRAAKRRA. The interval 25–57 is interaction with NPM1; that stretch reads AETELVRFLPAAGDENSKRLSSRARKRAAKRRA. The Nucleolar localization signal motif lies at 41–58; the sequence is SKRLSSRARKRAAKRRAG. 2 positions are modified to phosphoserine: serine 59 and serine 68. A Glycyl lysine isopeptide (Lys-Gly) (interchain with G-Cter in SUMO2) cross-link involves residue lysine 72. The residue at position 86 (arginine 86) is a Citrulline. Composition is skewed to acidic residues over residues 98 to 110 and 118 to 128; these read DGDEEEDSGEDDV and GSEDSDEDMVD. Arginine 148 carries the post-translational modification Citrulline. Over residues 165–178 the composition is skewed to acidic residues; the sequence is NEEDTDEDEDDDGV. Position 169 is a phosphothreonine (threonine 169). Serine 179 carries the post-translational modification Phosphoserine. A compositionally biased stretch (basic and acidic residues) spans 182 to 192; sequence SHPRKDDKAEG. A Glycyl lysine isopeptide (Lys-Gly) (interchain with G-Cter in SUMO2) cross-link involves residue lysine 257. The tract at residues 356–579 is catalytic domain; the sequence is ASSMLPVMAL…KKFSNSIPQP (224 aa). Residues 377-383, aspartate 401, aspartate 428, and aspartate 445 contribute to the S-adenosyl-L-methionine site; that span reads CCAPGGK. Residue cysteine 502 is the Nucleophile of the active site. Positions 576-793 are disordered; sequence IPQPHAGNSA…TKGNSQPLLS (218 aa). Residues 580–793 form a C-terminal domain region; it reads HAGNSAAATP…TKGNSQPLLS (214 aa). Polar residues predominate over residues 599–609; it reads TPKSENGSQPT. Lysine 601 is covalently cross-linked (Glycyl lysine isopeptide (Lys-Gly) (interchain with G-Cter in SUMO2)). At lysine 634 the chain carries N6-acetyllysine. At serine 649 the chain carries Phosphoserine. Over residues 654–668 the composition is skewed to polar residues; sequence QVSTRPSQSAGNADV. Over residues 671–686 the composition is skewed to basic residues; that stretch reads KRKRSEKLKQRGPKWK. Phosphoserine is present on residues serine 713, serine 767, serine 782, and serine 793. Over residues 784–793 the composition is skewed to polar residues; that stretch reads TKGNSQPLLS.

It belongs to the class I-like SAM-binding methyltransferase superfamily. RsmB/NOP family. Interacts with MCRS1. Interacts with WDR46. Interacts with RRP1B. Interacts with NPM1, NOP56, FBL, RUVBL1 and NUFIP1. Citrullinated by PADI4.

It localises to the nucleus. The protein localises to the nucleolus. The enzyme catalyses a cytidine in 28S rRNA + S-adenosyl-L-methionine = a 5-methylcytidine in 28S rRNA + S-adenosyl-L-homocysteine + H(+). S-adenosyl-L-methionine-dependent methyltransferase that specifically methylates the C(5) position of cytosine 4447 in 28S rRNA. Required for efficient rRNA processing and 60S ribosomal subunit biogenesis. Regulates pre-rRNA processing through non-catalytic complex formation with box C/D snoRNAs and facilitates the recruitment of U3 and U8 snoRNAs to pre-90S ribosomal particles and their stable assembly into snoRNP complexes. May play a role in the regulation of the cell cycle and the increased nucleolar activity that is associated with the cell proliferation. The protein is 28S rRNA (cytosine-C(5))-methyltransferase (Nop2) of Mus musculus (Mouse).